The sequence spans 337 residues: ATP-dependent 6-phosphofructokinase (337 aa).

G11 provides a ligand contact to ATP. Residue 21 to 25 (RAVVR) coordinates ADP. ATP contacts are provided by residues 72-73 (RY) and 102-105 (GDGS). D103 contributes to the Mg(2+) binding site. 125-127 (TID) is a binding site for substrate. D127 (proton acceptor) is an active-site residue. Position 154 (R154) interacts with ADP. Substrate contacts are provided by residues R162 and 169–171 (MGR). ADP is bound by residues 185-187 (GAD), R212, and 214-216 (KNH). Residues E223, R245, and 251-254 (HILR) contribute to the substrate site.

The protein belongs to the phosphofructokinase type A (PFKA) family. ATP-dependent PFK group I subfamily. Prokaryotic clade 'B1' sub-subfamily. Homotetramer. Mg(2+) serves as cofactor.

Its subcellular location is the cytoplasm. The enzyme catalyses beta-D-fructose 6-phosphate + ATP = beta-D-fructose 1,6-bisphosphate + ADP + H(+). It functions in the pathway carbohydrate degradation; glycolysis; D-glyceraldehyde 3-phosphate and glycerone phosphate from D-glucose: step 3/4. With respect to regulation, allosterically activated by ADP and other diphosphonucleosides, and allosterically inhibited by phosphoenolpyruvate. Its function is as follows. Catalyzes the phosphorylation of D-fructose 6-phosphate to fructose 1,6-bisphosphate by ATP, the first committing step of glycolysis. This chain is ATP-dependent 6-phosphofructokinase, found in Streptococcus equi subsp. zooepidemicus (strain H70).